A 371-amino-acid chain; its full sequence is UDP-N-acetylglucosamine--N-acetylmuramyl-(pentapeptide) pyrophosphoryl-undecaprenol N-acetylglucosamine transferase (371 aa).

UDP-N-acetyl-alpha-D-glucosamine is bound by residues 15–17 (TGG), N126, R172, S199, I256, 275–280 (ALTVSE), and Q301.

It belongs to the glycosyltransferase 28 family. MurG subfamily.

Its subcellular location is the cell inner membrane. It carries out the reaction di-trans,octa-cis-undecaprenyl diphospho-N-acetyl-alpha-D-muramoyl-L-alanyl-D-glutamyl-meso-2,6-diaminopimeloyl-D-alanyl-D-alanine + UDP-N-acetyl-alpha-D-glucosamine = di-trans,octa-cis-undecaprenyl diphospho-[N-acetyl-alpha-D-glucosaminyl-(1-&gt;4)]-N-acetyl-alpha-D-muramoyl-L-alanyl-D-glutamyl-meso-2,6-diaminopimeloyl-D-alanyl-D-alanine + UDP + H(+). Its pathway is cell wall biogenesis; peptidoglycan biosynthesis. Its function is as follows. Cell wall formation. Catalyzes the transfer of a GlcNAc subunit on undecaprenyl-pyrophosphoryl-MurNAc-pentapeptide (lipid intermediate I) to form undecaprenyl-pyrophosphoryl-MurNAc-(pentapeptide)GlcNAc (lipid intermediate II). In Francisella philomiragia subsp. philomiragia (strain ATCC 25017 / CCUG 19701 / FSC 153 / O#319-036), this protein is UDP-N-acetylglucosamine--N-acetylmuramyl-(pentapeptide) pyrophosphoryl-undecaprenol N-acetylglucosamine transferase.